We begin with the raw amino-acid sequence, 485 residues long: ATP-dependent rRNA helicase RRP3 (485 aa).

Over residues 1–10 the composition is skewed to basic residues; the sequence is MPVLKKRKLA. The interval 1–55 is disordered; sequence MPVLKKRKLAHTAQPDPIVSDLESSSSEASQQSHDEQLTAANEQDDESPQVQREE. Residues 20–32 show a composition bias toward low complexity; that stretch reads SDLESSSSEASQQ. Residues 59–87 carry the Q motif motif; it reads KSFKDLGIIDSLCEACEALGYKSPTPIQA. In terms of domain architecture, Helicase ATP-binding spans 90–261; it reads IPLALQGRDL…RASLSNPLRV (172 aa). 103 to 110 is an ATP binding site; it reads AETGSGKT. Positions 209-212 match the DEAD box motif; sequence DEAD. In terms of domain architecture, Helicase C-terminal spans 285-433; that stretch reads YKDIYLVYLL…EYKVEKEEVM (149 aa). Residues 449-458 show a composition bias toward basic and acidic residues; that stretch reads EMKDLHEKRG. Residues 449–485 form a disordered region; sequence EMKDLHEKRGSRGATLKGRRPAKGAKRGRDEMDREEG. Basic residues predominate over residues 465–474; that stretch reads KGRRPAKGAK. A compositionally biased stretch (basic and acidic residues) spans 475 to 485; sequence RGRDEMDREEG.

It belongs to the DEAD box helicase family. DDX47/RRP3 subfamily. As to quaternary structure, interacts with the SSU processome.

Its subcellular location is the nucleus. The enzyme catalyses ATP + H2O = ADP + phosphate + H(+). Its function is as follows. ATP-dependent rRNA helicase required for pre-ribosomal RNA processing. Involved in the maturation of the 35S-pre-rRNA and to its cleavage to mature 18S rRNA. The protein is ATP-dependent rRNA helicase RRP3 of Ajellomyces capsulatus (strain NAm1 / WU24) (Darling's disease fungus).